We begin with the raw amino-acid sequence, 318 residues long: Ribose-phosphate pyrophosphokinase 3 (318 aa).

96 to 101 (RQDKKD) contributes to the ATP binding site. Positions 128, 130, 139, and 143 each coordinate Mg(2+). Histidine 130 contributes to the ATP binding site. The tract at residues 212–227 (NDRVAILVDDMADTCV) is binding of phosphoribosylpyrophosphate.

Belongs to the ribose-phosphate pyrophosphokinase family. As to quaternary structure, homodimer. The active form is probably a hexamer composed of 3 homodimers. Mg(2+) is required as a cofactor. Testis.

The catalysed reaction is D-ribose 5-phosphate + ATP = 5-phospho-alpha-D-ribose 1-diphosphate + AMP + H(+). Its pathway is metabolic intermediate biosynthesis; 5-phospho-alpha-D-ribose 1-diphosphate biosynthesis; 5-phospho-alpha-D-ribose 1-diphosphate from D-ribose 5-phosphate (route I): step 1/1. With respect to regulation, activated by magnesium and inorganic phosphate. Catalyzes the synthesis of phosphoribosylpyrophosphate (PRPP) that is essential for nucleotide synthesis. This chain is Ribose-phosphate pyrophosphokinase 3 (PRPS1L1), found in Homo sapiens (Human).